The following is a 286-amino-acid chain: Cbb3-type cytochrome c oxidase subunit CcoP (286 aa).

2 helical membrane-spanning segments follow: residues 11–31 (FGLI…SSLI) and 62–82 (VGWI…FFFG). Cytochrome c domains follow at residues 116–195 (ELVD…MAEL) and 205–286 (QLID…LSNR). Positions 129, 132, 133, 174, 219, 222, 223, and 264 each coordinate heme c.

It belongs to the CcoP / FixP family. In terms of assembly, component of the cbb3-type cytochrome c oxidase at least composed of CcoN, CcoO, CcoQ and CcoP. The cofactor is heme c.

The protein resides in the cell inner membrane. It participates in energy metabolism; oxidative phosphorylation. Functionally, C-type cytochrome. Part of the cbb3-type cytochrome c oxidase complex. CcoP subunit is required for transferring electrons from donor cytochrome c via its heme groups to CcoO subunit. From there, electrons are shuttled to the catalytic binuclear center of CcoN subunit where oxygen reduction takes place. The complex also functions as a proton pump. The chain is Cbb3-type cytochrome c oxidase subunit CcoP from Helicobacter pylori (strain ATCC 700392 / 26695) (Campylobacter pylori).